The primary structure comprises 1068 residues: Focal adhesion kinase 1 (1068 aa).

Positions 1-26 (MAAAYLDPNLNHNPSTNAKSRLSTGM) are disordered. The segment covering 10 to 23 (LNHNPSTNAKSRLS) has biased composition (polar residues). The FERM domain maps to 35 to 355 (RVLRVFHYFE…GYCRLVSGAS (321 aa)). A phosphotyrosine mark is found at Tyr-403 and Tyr-413. In terms of domain architecture, Protein kinase spans 435-693 (IELGRCIGEG…ELKAQLSTIL (259 aa)). ATP-binding positions include 441–447 (IGEGQFG), Lys-467, and 513–515 (ELC). Asp-559 serves as the catalytic Proton acceptor. Phosphotyrosine; by autocatalysis occurs at positions 589 and 590. Basic and acidic residues predominate over residues 699 to 710 (QQEERMRMESRR). Disordered stretches follow at residues 699-750 (QQEE…QHMM) and 869-912 (GNQH…DGYN). Residues Tyr-874 and Tyr-941 each carry the phosphotyrosine modification.

Belongs to the protein kinase superfamily. Tyr protein kinase family. FAK subfamily. Post-translationally, phosphorylated on tyrosine residues; phosphorylated kinase is first detected during gastrulation, suggesting that tyrosine phosphorylation is developmentally regulated.

It is found in the cell junction. It localises to the focal adhesion. The protein localises to the cell membrane. The protein resides in the cytoplasm. Its subcellular location is the cytoskeleton. It is found in the cilium basal body. It catalyses the reaction L-tyrosyl-[protein] + ATP = O-phospho-L-tyrosyl-[protein] + ADP + H(+). Its function is as follows. Non-receptor protein-tyrosine kinase implicated in signaling pathways involved in cell motility, proliferation and apoptosis. Activated by tyrosine-phosphorylation in response to either integrin clustering induced by cell adhesion or antibody cross-linking, or via G-protein coupled receptor (GPCR) occupancy by ligands such as bombesin or lysophosphatidic acid, or via LDL receptor occupancy. Microtubule-induced dephosphorylation at Tyr-397 is crucial for the induction of focal adhesion disassembly. The protein is Focal adhesion kinase 1 (ptk2) of Xenopus laevis (African clawed frog).